The primary structure comprises 666 residues: Endogenous retrovirus group K member 6 Gag polyprotein (666 aa).

Residue glycine 2 is the site of N-myristoyl glycine attachment. A disordered region spans residues 165–264 (GKGPELVGPS…APPSRQGSKL (100 aa)). Over residues 232 to 247 (GMPPAPQGRAPYPQPP) the composition is skewed to pro residues. 2 consecutive CCHC-type zinc fingers follow at residues 544 to 561 (RKCYNCGQIGHLKKNCPV) and 580 to 597 (DLCPRCKKGKHWASQCRS). The disordered stretch occupies residues 598–642 (KFDKNGQPLSGNEQRGQPQAPQQTGAFPIQPFVPQGFQGQQPPLS). The segment covering 604 to 622 (QPLSGNEQRGQPQAPQQTG) has biased composition (polar residues). Low complexity predominate over residues 624–640 (FPIQPFVPQGFQGQQPP).

The protein belongs to the beta type-B retroviral Gag protein family. HERV class-II K(HML-2) gag subfamily. Post-translationally, myristoylation is essential for retroviral assembly. Alteration of the glycine residue leads to a block in the budding of particles and an accumulation of Gag inside the cell. Specific enzymatic cleavages may yield mature proteins.

The protein resides in the cell membrane. Functionally, the products of the Gag polyproteins of infectious retroviruses perform highly complex orchestrated tasks during the assembly, budding, maturation, and infection stages of the viral replication cycle. During viral assembly, the proteins form membrane associations and self-associations that ultimately result in budding of an immature virion from the infected cell. Gag precursors also function during viral assembly to selectively bind and package two plus strands of genomic RNA. Endogenous Gag proteins may have kept, lost or modified their original function during evolution. This is Endogenous retrovirus group K member 6 Gag polyprotein (ERVK-6) from Homo sapiens (Human).